The chain runs to 1262 residues: MSTKFSFTPSQDQAIHQTGNNLLVSASAGSGKTRVLVQRVIERLKTGVGIDQILIVTFTKAAAAEMRERIQTALRQELAVSQGDSAQQQFYLRQLNQLPVADISTLDAFCLRLLQRYYYVIDLDPVFRLLADETENGLLRDEVWADLREDLYANDDSGLFARLTENFSGDRNDQGLADLVQQTYTFANATPNPTAWLAELPQPYQLDSDQLMTTSFYQQRLRPFFQSQLQQLQADLTSAQALANQAGLDKQAAHVTAVLENVAAVQQLVTGDSWNALRAAIQDFAWGRMPAVRKTNEDYPIYNELKTTYYDPARKQLDSLKKTYLIQDEQQAMTTIRRSGELVGELSRVVTAFRTAYRQEKQRRHVLDFADVEHAALAILTQDSDQSRQVAAQLRHQFAEIMVDEYQDTNGLQEAILTAIAEPAPQGNLFMVGDVKQSIYRFRQADPTLFMTKTDQYAADAAAGELIVLAENFRSMKNVDDFTNLIFKQLMDRELGEIDYTGAAQLKFGASYYPDTVTSTAELLVYLTEDAPESAGDADSEAMDATFQVDNKHQGEVLMVGQKIQQLIADQTPIYDREAKQVRPMTYGDITLLTPTRTNNLIITDELRRLGIPVVVNDARNYFKTTEIQIMMALLQIIDNPYQDIPLAAVLRSPIVGLNENELALLRINQRTGDYYQAVLHFQRSFVPNQASDFQQAVYQKVSHFLEQLQEFRDIAQQDELVTLIWRIYQETGFLDYVGGMPAGEQRQANLHALYERAKSYEQSSFKGLFQFVRFVERLQERDDDLAGAPVQAADDAVSVMTIHGSKGLEFPVVFIMDASRQFNKQDQQGNYVMSGKTGIGIDYLDPDSRVKAPSLQKLVTAQAISRASLAEEMRKLYVALTRAESRVYIVGSHKTQEAAISAWEQAYQSPNLVLNATLREKNTLANYLDWIGMCLVRDPKFAAELRQGTTTFSGLAGDPATFAVHFVTAHDLGPTQGVNETAVDWLQAASETAAKVTTPPVDTEQLHQIMDFRYPHQAATATTAYQSVSEAKRLFEDPDNATIGEYQASATGQVGGHRFVTHDFARPDFLQTVREPLATEIGSATHLVLQQLDVTVTPTLDRVQGVIDQLVADQVLTAEVAQRIQPELILRFFSSSVGQQVLAAPDQLHREVPFSLLMPARSLFQDFQETDSQVLVHGIIDGYLTTPAGVILFDYKTDHVNAQNQAASIEKIVERYGGQVNLYAAALKQMTGQPIVGQYLYLLAIGELVAVPEQQVRRLSE.

Residues 5-476 (FSFTPSQDQA…IVLAENFRSM (472 aa)) enclose the UvrD-like helicase ATP-binding domain. 26-33 (ASAGSGKT) contacts ATP. In terms of domain architecture, UvrD-like helicase C-terminal spans 515-808 (DTVTSTAELL…SVMTIHGSKG (294 aa)).

Belongs to the helicase family. AddA subfamily. In terms of assembly, heterodimer of AddA and AddB/RexB. Requires Mg(2+) as cofactor.

It catalyses the reaction Couples ATP hydrolysis with the unwinding of duplex DNA by translocating in the 3'-5' direction.. The enzyme catalyses ATP + H2O = ADP + phosphate + H(+). In terms of biological role, the heterodimer acts as both an ATP-dependent DNA helicase and an ATP-dependent, dual-direction single-stranded exonuclease. Recognizes the chi site generating a DNA molecule suitable for the initiation of homologous recombination. The AddA nuclease domain is required for chi fragment generation; this subunit has the helicase and 3' -&gt; 5' nuclease activities. The polypeptide is ATP-dependent helicase/nuclease subunit A (Levilactobacillus brevis (strain ATCC 367 / BCRC 12310 / CIP 105137 / JCM 1170 / LMG 11437 / NCIMB 947 / NCTC 947) (Lactobacillus brevis)).